Reading from the N-terminus, the 674-residue chain is MGALASRQHAGVEEMDMPCNSLYRYPPKSGSYFGSHFIMGGEKFESSHPEGYLFGENSDLNFLGSRPVTFPYTAPSPQEPVKTLRSLINIRKDTLRLVRCTEELKTTGVEGSRPKVHYNVEFTFDTDARVAITMYYQATEEFQGGIPSYLPKSSNLQSDTVHFKRGVSQQFCFPSHTVDPSEWREEELTFDLDREVYPMVVHAVVEEGEEHLGHSHVLMATFEKHADGSFCVKPLKQKQVVDGVSYLLQEIYGIENKYNSQDSKVAEDELSDNSAECVVCLSDVRDTLILPCRHLCLCNACADTLRYQASNCPICRLPFRALLQIRAMRKVPGPHSPGGFSPIIAAPTSDSEEHTSEHVPPGYEVVSLLEALNGPLTPSPSAPPLRALGEARRPGGLPSYGSDIHLRMHSPLQHLCGGQALKLKKSISRSISQNSSVLQEDEMEKSFSEAEIQTPRKKTSQLAEENGVTPESENLTLSSSGAIDQSSCTGTPLSPTISSPEDPLSSSLAQSIMSMASSHSQQSQLSTDTVSSMSGSYTAGGMEEEEGGITPSPPAAASGSPSIEGELSPAESPEPHFVTVSAEEMDAEGNVTEEEFASPEEDDGQMTGRECDNNNAAGVTLRDVLDNVRGSEGCLADVCYSSIPGQQRSNPYHGSDNCISLQDDTQSHLSTKLV.

The RING-type zinc-finger motif lies at 277 to 316 (CVVCLSDVRDTLILPCRHLCLCNACADTLRYQASNCPICR). Disordered stretches follow at residues 376 to 404 (LTPS…GSDI) and 433 to 610 (QNSS…TGRE). Residues 469 to 508 (TPESENLTLSSSGAIDQSSCTGTPLSPTISSPEDPLSSSL) show a composition bias toward polar residues. Residues 509-526 (AQSIMSMASSHSQQSQLS) show a composition bias toward low complexity. The segment covering 527-537 (TDTVSSMSGSY) has biased composition (polar residues). Positions 583 to 604 (EEMDAEGNVTEEEFASPEEDDG) are enriched in acidic residues.

Its subcellular location is the cytoplasm. The enzyme catalyses S-ubiquitinyl-[E2 ubiquitin-conjugating enzyme]-L-cysteine + [acceptor protein]-L-lysine = [E2 ubiquitin-conjugating enzyme]-L-cysteine + N(6)-ubiquitinyl-[acceptor protein]-L-lysine.. E3 ubiquitin ligase that ubiquitinates apbb1 for its degradation by the proteasome and thus prevents apoptosis and promotes survival of neurons. Has a dual role in neurons as it is also required for dendrite growth and maintenance for which its ligase activity is not critical. May act as a scaffold molecule to regulate this process. Acts as a downstream effector of the interconnected PI3K and MAPK signaling pathways and thus participates in the regulation of the cell cycle. In Xenopus laevis (African clawed frog), this protein is E3 ubiquitin ligase Rnf157 (rnf157).